We begin with the raw amino-acid sequence, 322 residues long: Nodulation protein Z (322 aa).

The region spanning 1 to 314 (MYNRYVLSRR…NDPSRLVVIE (314 aa)) is the GT23 domain.

The protein belongs to the glycosyltransferase 23 family.

Fucosyltransferase which adds the fucose moiety of the nod factor on its terminal reducing N-acetylglucosamine end. Uses GDP-fucose as the donor group. The sequence is that of Nodulation protein Z (nodZ) from Sinorhizobium fredii (strain NBRC 101917 / NGR234).